Reading from the N-terminus, the 823-residue chain is Mitochondrial intermediate peptidase 2 (823 aa).

A mitochondrion-targeting transit peptide spans 1-33 (MRRLQQSLRRRSARRCPFILIPHRLLTTSYASY). Residues 532-553 (IDGDGLPEDWDKPYGPGLEADK) are disordered. His595 contacts Zn(2+). The active site involves Glu596. His599 and His602 together coordinate Zn(2+).

The protein belongs to the peptidase M3 family. It depends on Zn(2+) as a cofactor.

It localises to the mitochondrion matrix. The enzyme catalyses Release of an N-terminal octapeptide as second stage of processing of some proteins imported into the mitochondrion.. Cleaves proteins, imported into the mitochondrion, to their mature size. While most mitochondrial precursor proteins are processed to the mature form in one step by mitochondrial processing peptidase (MPP), the sequential cleavage by MIP of an octapeptide after initial processing by MPP is a required step for a subgroup of nuclear-encoded precursor proteins destined for the matrix or the inner membrane. The polypeptide is Mitochondrial intermediate peptidase 2 (OCT2) (Cryptococcus neoformans var. neoformans serotype D (strain B-3501A) (Filobasidiella neoformans)).